The following is a 287-amino-acid chain: Pirin-1 (287 aa).

The residue at position 2 (Thr2) is an N-acetylthreonine.

The protein belongs to the pirin family. Interacts with the G protein alpha-1 subunit GPA1. Interacts with NFYB6 and NFYB9.

It localises to the nucleus. Functionally, involved in abscisic acid signal transduction. Plays a role in seed germination and early seedling development. Involved in the blue light (BL) signaling. In Arabidopsis thaliana (Mouse-ear cress), this protein is Pirin-1 (PRN1).